A 549-amino-acid polypeptide reads, in one-letter code: Chaperonin GroEL (549 aa).

Residues 29 to 32 (TLGP), K50, 86 to 90 (DGTTT), G413, 479 to 481 (NAA), and D496 each bind ATP. The tract at residues 522 to 549 (VSDKPEKPQQGGQGGGGMGGGDMGGMDF) is disordered. The segment covering 532-549 (GGQGGGGMGGGDMGGMDF) has biased composition (gly residues).

It belongs to the chaperonin (HSP60) family. In terms of assembly, forms a cylinder of 14 subunits composed of two heptameric rings stacked back-to-back. Interacts with the co-chaperonin GroES.

The protein resides in the cytoplasm. The catalysed reaction is ATP + H2O + a folded polypeptide = ADP + phosphate + an unfolded polypeptide.. Together with its co-chaperonin GroES, plays an essential role in assisting protein folding. The GroEL-GroES system forms a nano-cage that allows encapsulation of the non-native substrate proteins and provides a physical environment optimized to promote and accelerate protein folding. This chain is Chaperonin GroEL, found in Deinococcus deserti (strain DSM 17065 / CIP 109153 / LMG 22923 / VCD115).